Here is a 341-residue protein sequence, read N- to C-terminus: uncharacterized protein (341 aa).

4 WD repeats span residues 19–59 (SLGS…QVHT), 106–145 (GHTDIVSSIEVSPIEDQFVSTANDKTLKLWKMNQSSRCLG), 252–293 (PFSN…HHKG), and 303–341 (VSQSIINPGLVKYNPRYDQLLTAGSQLVFWLPEKYALTS).

It is found in the cytoplasm. The protein localises to the nucleus. This is an uncharacterized protein from Schizosaccharomyces pombe (strain 972 / ATCC 24843) (Fission yeast).